The chain runs to 372 residues: Glutamate 5-kinase (372 aa).

Lysine 14 contributes to the ATP binding site. Residues serine 54, aspartate 141, and asparagine 153 each contribute to the substrate site. Residues threonine 173–aspartate 174 and threonine 215–lysine 221 contribute to the ATP site. Positions arginine 280–aspartate 358 constitute a PUA domain.

The protein belongs to the glutamate 5-kinase family.

The protein resides in the cytoplasm. The catalysed reaction is L-glutamate + ATP = L-glutamyl 5-phosphate + ADP. It participates in amino-acid biosynthesis; L-proline biosynthesis; L-glutamate 5-semialdehyde from L-glutamate: step 1/2. Functionally, catalyzes the transfer of a phosphate group to glutamate to form L-glutamate 5-phosphate. The sequence is that of Glutamate 5-kinase from Shewanella halifaxensis (strain HAW-EB4).